A 147-amino-acid polypeptide reads, in one-letter code: Probable flagellum biosynthesis repressor protein FlbT (147 aa).

This sequence belongs to the FlbT family.

Its function is as follows. Has a post-transcriptional repressor function in flagellum biogenesis. Associates with the 5'-UTR of fljK mRNA and promotes its degradation. The sequence is that of Probable flagellum biosynthesis repressor protein FlbT from Mesorhizobium japonicum (strain LMG 29417 / CECT 9101 / MAFF 303099) (Mesorhizobium loti (strain MAFF 303099)).